Here is a 497-residue protein sequence, read N- to C-terminus: RNA polymerase sigma factor SigA (497 aa).

2 disordered regions span residues 1-20 (MSTD…PELS) and 62-86 (KTLH…HAPL). A compositionally biased stretch (basic and acidic residues) spans 63-73 (TLHENKESDVP). Over residues 74–84 (KKRRGRKPKHA) the composition is skewed to basic residues. Residues 250–320 (LVTSNLRLVV…TRAIADQART (71 aa)) form a sigma-70 factor domain-2 region. The Interaction with polymerase core subunit RpoC signature appears at 274–277 (DLIQ). The interval 329–410 (ETINRLAKAE…DTDAQTPDEF (82 aa)) is sigma-70 factor domain-3. Residues 423–478 (LLNNNLSEQEELIVRMRIGMPPYNEPKTLDEVGQKILIPREKIRQIENKAIRKLRH) form a sigma-70 factor domain-4 region. A DNA-binding region (H-T-H motif) is located at residues 451-470 (LDEVGQKILIPREKIRQIEN).

It belongs to the sigma-70 factor family. RpoD/SigA subfamily. Interacts transiently with the RNA polymerase catalytic core.

It is found in the cytoplasm. Its function is as follows. Sigma factors are initiation factors that promote the attachment of RNA polymerase to specific initiation sites and are then released. This sigma factor is the primary sigma factor during exponential growth. This is RNA polymerase sigma factor SigA from Mycoplasma genitalium (strain ATCC 33530 / DSM 19775 / NCTC 10195 / G37) (Mycoplasmoides genitalium).